The sequence spans 454 residues: Bifunctional protein GlmU (454 aa).

Positions 1-232 (MTDRTCLSIV…VDNVIGINNR (232 aa)) are pyrophosphorylase. Residues 11–14 (LAAG), Lys25, Gln78, and 83–84 (GT) contribute to the UDP-N-acetyl-alpha-D-glucosamine site. Asp108 provides a ligand contact to Mg(2+). UDP-N-acetyl-alpha-D-glucosamine contacts are provided by Gly144, Glu158, Asn173, and Asn230. Residue Asn230 coordinates Mg(2+). The linker stretch occupies residues 233 to 253 (AELAEAETIWQNRKRRELMLS). Positions 254 to 454 (GVTLIAPETV…AIKAAKSVSK (201 aa)) are N-acetyltransferase. Arg319 and Lys337 together coordinate UDP-N-acetyl-alpha-D-glucosamine. His349 (proton acceptor) is an active-site residue. UDP-N-acetyl-alpha-D-glucosamine contacts are provided by Tyr352 and Asn363. Residues Ala366, 372 to 373 (NY), Ser391, Ser409, and Arg426 each bind acetyl-CoA.

This sequence in the N-terminal section; belongs to the N-acetylglucosamine-1-phosphate uridyltransferase family. It in the C-terminal section; belongs to the transferase hexapeptide repeat family. In terms of assembly, homotrimer. The cofactor is Mg(2+).

The protein resides in the cytoplasm. It catalyses the reaction alpha-D-glucosamine 1-phosphate + acetyl-CoA = N-acetyl-alpha-D-glucosamine 1-phosphate + CoA + H(+). It carries out the reaction N-acetyl-alpha-D-glucosamine 1-phosphate + UTP + H(+) = UDP-N-acetyl-alpha-D-glucosamine + diphosphate. Its pathway is nucleotide-sugar biosynthesis; UDP-N-acetyl-alpha-D-glucosamine biosynthesis; N-acetyl-alpha-D-glucosamine 1-phosphate from alpha-D-glucosamine 6-phosphate (route II): step 2/2. It participates in nucleotide-sugar biosynthesis; UDP-N-acetyl-alpha-D-glucosamine biosynthesis; UDP-N-acetyl-alpha-D-glucosamine from N-acetyl-alpha-D-glucosamine 1-phosphate: step 1/1. It functions in the pathway bacterial outer membrane biogenesis; LPS lipid A biosynthesis. Functionally, catalyzes the last two sequential reactions in the de novo biosynthetic pathway for UDP-N-acetylglucosamine (UDP-GlcNAc). The C-terminal domain catalyzes the transfer of acetyl group from acetyl coenzyme A to glucosamine-1-phosphate (GlcN-1-P) to produce N-acetylglucosamine-1-phosphate (GlcNAc-1-P), which is converted into UDP-GlcNAc by the transfer of uridine 5-monophosphate (from uridine 5-triphosphate), a reaction catalyzed by the N-terminal domain. The protein is Bifunctional protein GlmU of Brucella canis (strain ATCC 23365 / NCTC 10854 / RM-666).